A 516-amino-acid polypeptide reads, in one-letter code: 2,3-bisphosphoglycerate-independent phosphoglycerate mutase (516 aa).

Asp14 and Ser64 together coordinate Mn(2+). Ser64 functions as the Phosphoserine intermediate in the catalytic mechanism. Substrate contacts are provided by residues His125, Arg155–Asp156, Arg187, Arg193, Arg263–Arg266, and Lys337. Residues Asp404, His408, Asp445, His446, and His464 each contribute to the Mn(2+) site.

The protein belongs to the BPG-independent phosphoglycerate mutase family. In terms of assembly, monomer. It depends on Mn(2+) as a cofactor.

The catalysed reaction is (2R)-2-phosphoglycerate = (2R)-3-phosphoglycerate. The protein operates within carbohydrate degradation; glycolysis; pyruvate from D-glyceraldehyde 3-phosphate: step 3/5. Its function is as follows. Catalyzes the interconversion of 2-phosphoglycerate and 3-phosphoglycerate. This chain is 2,3-bisphosphoglycerate-independent phosphoglycerate mutase, found in Saccharophagus degradans (strain 2-40 / ATCC 43961 / DSM 17024).